Here is a 300-residue protein sequence, read N- to C-terminus: DDRGK domain-containing protein 1 (300 aa).

The Lumenal portion of the chain corresponds to Met-1–Asp-2. The helical transmembrane segment at Val-3–Ile-23 threads the bilayer. The Cytoplasmic segment spans residues Arg-24–Ala-300. The interval Gln-28 to Glu-173 is disordered. Positions Asn-78–Glu-90 are enriched in acidic residues. Basic and acidic residues predominate over residues Lys-112–Glu-173. Positions Ser-183–Glu-197 match the UFM1-interacting motif (UFIM) motif. The region spanning Val-217 to Pro-261 is the PCI domain.

It belongs to the DDRGK1 family. In terms of assembly, component of the UFM1 ribosome E3 ligase (UREL) complex, composed of ufl1, ddrgk1 and cdk5rap3.

Its subcellular location is the endoplasmic reticulum membrane. In terms of biological role, component of the UFM1 ribosome E3 ligase (UREL) complex, a multiprotein complex that catalyzes ufmylation of endoplasmic reticulum-docked proteins. The UREL complex plays a key role in ribosome recycling by mediating mono-ufmylation of the RPL26/uL24 subunit of the 60S ribosome following ribosome dissociation: ufmylation weakens the junction between post-termination 60S subunits and SEC61 translocons, promoting release and recycling of the large ribosomal subunit from the endoplasmic reticulum membrane. Ufmylation of RPL26/uL24 and subsequent 60S ribosome recycling either take place after normal termination of translation or after ribosome stalling during cotranslational translocation at the endoplasmic reticulum. Within the UREL complex, DDRGK1 tethers the complex to the endoplasmic reticulum membrane to restrict its activity to endoplasmic reticulum-docked ribosomes and acts as an ufmylation 'reader': following RPL26/uL24 ufmylation, DDRGK1 specifically binds to ufmylated RPL26/uL24 via its UFIM motif, resulting in stable association between the 60S ribosome and the UREL complex, followed by dissociation of the 60S ribosome subunit from the endoplasmic reticulum membrane. The UREL complex is also involved in reticulophagy in response to endoplasmic reticulum stress by promoting ufmylation of proteins such as CYB5R3 and RPN1, thereby promoting lysosomal degradation of ufmylated proteins. Plays a role in cartilage development through sox9, inhibiting the ubiquitin-mediated proteasomal degradation of this transcriptional regulator. Required for stabilization and ufmylation of ATG9A. The chain is DDRGK domain-containing protein 1 from Danio rerio (Zebrafish).